The chain runs to 1392 residues: L-2-aminoadipate reductase (1392 aa).

Lysine 541 participates in a covalent cross-link: Glycyl lysine isopeptide (Lys-Gly) (interchain with G-Cter in ubiquitin). The Carrier domain occupies 843-920 (SQFTNVEREV…AFAAEIDRIK (78 aa)). Residue serine 880 is modified to O-(pantetheine 4'-phosphoryl)serine. A Glycyl lysine isopeptide (Lys-Gly) (interchain with G-Cter in ubiquitin) cross-link involves residue lysine 1276.

Belongs to the ATP-dependent AMP-binding enzyme family. It depends on pantetheine 4'-phosphate as a cofactor.

The enzyme catalyses (S)-2-amino-6-oxohexanoate + NADP(+) + H2O = L-2-aminoadipate + NADPH + 2 H(+). The catalysed reaction is (S)-2-amino-6-oxohexanoate + NAD(+) + H2O = L-2-aminoadipate + NADH + 2 H(+). It catalyses the reaction (S)-2-amino-6-oxohexanoate + AMP + diphosphate + NADP(+) = L-2-aminoadipate + ATP + NADPH + H(+). The protein operates within amino-acid biosynthesis; L-lysine biosynthesis via AAA pathway; L-lysine from L-alpha-aminoadipate (fungal route): step 1/3. Functionally, catalyzes the activation of alpha-aminoadipate by ATP-dependent adenylation and the reduction of activated alpha-aminoadipate by NADPH. The activated alpha-aminoadipate is bound to the phosphopantheinyl group of the enzyme itself before it is reduced to (S)-2-amino-6-oxohexanoate. The protein is L-2-aminoadipate reductase (LYS2) of Saccharomyces cerevisiae (strain ATCC 204508 / S288c) (Baker's yeast).